Here is a 508-residue protein sequence, read N- to C-terminus: Photosystem II CP47 reaction center protein (508 aa).

6 consecutive transmembrane segments (helical) span residues 21-36, 101-115, 140-156, 203-218, 237-252, and 457-472; these read AVHI…WAGS, IVFS…IWHW, GIHL…FGAF, IAAG…FHLS, VLSS…AFVV, and SFAL…HGAR.

It belongs to the PsbB/PsbC family. PsbB subfamily. As to quaternary structure, PSII is composed of 1 copy each of membrane proteins PsbA, PsbB, PsbC, PsbD, PsbE, PsbF, PsbH, PsbI, PsbJ, PsbK, PsbL, PsbM, PsbT, PsbX, PsbY, PsbZ, Psb30/Ycf12, at least 3 peripheral proteins of the oxygen-evolving complex and a large number of cofactors. It forms dimeric complexes. Interacts with PAM68. Interacts with HHL1. Binds multiple chlorophylls. PSII binds additional chlorophylls, carotenoids and specific lipids. serves as cofactor.

Its subcellular location is the plastid. The protein localises to the chloroplast thylakoid membrane. In terms of biological role, one of the components of the core complex of photosystem II (PSII). It binds chlorophyll and helps catalyze the primary light-induced photochemical processes of PSII. PSII is a light-driven water:plastoquinone oxidoreductase, using light energy to abstract electrons from H(2)O, generating O(2) and a proton gradient subsequently used for ATP formation. This is Photosystem II CP47 reaction center protein from Arabidopsis thaliana (Mouse-ear cress).